A 640-amino-acid chain; its full sequence is Fructose-1,6-bisphosphatase class 3 (640 aa).

This sequence belongs to the FBPase class 3 family. Mn(2+) is required as a cofactor.

It carries out the reaction beta-D-fructose 1,6-bisphosphate + H2O = beta-D-fructose 6-phosphate + phosphate. It participates in carbohydrate biosynthesis; gluconeogenesis. The polypeptide is Fructose-1,6-bisphosphatase class 3 (Lactococcus lactis subsp. cremoris (strain MG1363)).